The chain runs to 237 residues: Lectin (237 aa).

Residues Glu-8 and Asp-10 each coordinate Mn(2+). Ca(2+) contacts are provided by Asp-10, Tyr-12, Asn-14, and Asp-19. Tyr-12 and Asn-14 together coordinate a carbohydrate. Asp-19 and His-24 together coordinate Mn(2+). An a carbohydrate-binding site is contributed by 98-100; the sequence is GLY. Asp-208 is a Ca(2+) binding site. Residues Gly-227 and Arg-228 each contribute to the a carbohydrate site.

It belongs to the leguminous lectin family. In terms of assembly, homotetramer; dimer of dimers. In terms of processing, concanavalin A-like lectins of the Diocleinae subtribe undergo proteolytic processing referred to as circular permutation. The propeptide is split into an N-terminal and a C-terminal part, the gamma and beta chain, respectively. These are then religated in beta-gamma order to form the mature alpha chain. The beta and gamma chains can often be detected in cell extracts. Residues 1-118 of the mature chain, as displayed here, probably constitute the beta chain in the propeptide, residues 119-237 the gamma chain.

In terms of biological role, D-mannose/D-glucose-binding lectin with hemagglutinating activity towards rabbit and human erythrocytes. In rats, induces dose-dependent paw edema. Has low cytotoxicity against Artemisia sp. The protein is Lectin of Macropsychanthus comosus (Sea purse).